Here is a 507-residue protein sequence, read N- to C-terminus: Probable lipid II flippase MurJ (507 aa).

The next 13 membrane-spanning stretches (helical) occupy residues 3 to 23, 54 to 74, 92 to 112, 132 to 152, 156 to 176, 185 to 205, 268 to 288, 310 to 330, 351 to 371, 379 to 399, 405 to 425, 438 to 458, and 472 to 492; these read LFRSGIILAFLTFIARIFGLV, IFAEGALSSVFIPIYNEKMLI, LTLIVIIALMQIFMPQLILCI, ITIPYLIFVSLTALLGGILNS, FAAFAFSPIILSVCVIIFTLI, ISISVSLIIAGILQVVFMFIC, IYQFPLSIIGTSFSTILLPEM, IGLLLSLPATFGIIILSHPIT, ISAFALGLPAFILAKILTPIF, TPLKITLFSIIINTNMNLLLM, IGIAVGTSIAAWYNLGLLYSY, IKLFCAKILLCCTLMSIIIAL, and LLIKVSMLGSTIIIGVAIFFG.

The protein belongs to the MurJ/MviN family.

The protein resides in the cell inner membrane. The protein operates within cell wall biogenesis; peptidoglycan biosynthesis. Its function is as follows. Involved in peptidoglycan biosynthesis. Transports lipid-linked peptidoglycan precursors from the inner to the outer leaflet of the cytoplasmic membrane. The polypeptide is Probable lipid II flippase MurJ (Rickettsia prowazekii (strain Madrid E)).